We begin with the raw amino-acid sequence, 330 residues long: Flotillin-like protein FloA (330 aa).

The next 2 helical transmembrane spans lie at 5 to 25 (FLPLILLGAAVLLLAIFFYYV) and 27 to 47 (FLLWISAKVSGVNISLIQLFL).

This sequence belongs to the flotillin-like FloA family. In terms of assembly, homooligomerizes.

Its subcellular location is the cell membrane. The protein resides in the membrane raft. Its function is as follows. Found in functional membrane microdomains (FMM) that may be equivalent to eukaryotic membrane rafts. FMMs are highly dynamic and increase in number as cells age. Flotillins are thought to be important factors in membrane fluidity. In Parabacteroides distasonis (strain ATCC 8503 / DSM 20701 / CIP 104284 / JCM 5825 / NCTC 11152), this protein is Flotillin-like protein FloA.